Reading from the N-terminus, the 205-residue chain is GTP cyclohydrolase-2 (205 aa).

49–53 is a GTP binding site; that stretch reads RIHSE. Zn(2+) contacts are provided by Cys-54, Cys-65, and Cys-67. Residues Gln-70, 92–94, and Thr-114 contribute to the GTP site; that span reads EGR. Asp-126 functions as the Proton acceptor in the catalytic mechanism. The Nucleophile role is filled by Arg-128. Thr-149 and Lys-154 together coordinate GTP.

Belongs to the GTP cyclohydrolase II family. Zn(2+) serves as cofactor.

It catalyses the reaction GTP + 4 H2O = 2,5-diamino-6-hydroxy-4-(5-phosphoribosylamino)-pyrimidine + formate + 2 phosphate + 3 H(+). Its pathway is cofactor biosynthesis; riboflavin biosynthesis; 5-amino-6-(D-ribitylamino)uracil from GTP: step 1/4. Its function is as follows. Catalyzes the conversion of GTP to 2,5-diamino-6-ribosylamino-4(3H)-pyrimidinone 5'-phosphate (DARP), formate and pyrophosphate. This is GTP cyclohydrolase-2 from Shewanella denitrificans (strain OS217 / ATCC BAA-1090 / DSM 15013).